Here is a 305-residue protein sequence, read N- to C-terminus: Orotidine 5'-phosphate decarboxylase (305 aa).

The Proton donor role is filled by Lys108.

This sequence belongs to the OMP decarboxylase family. Type 2 subfamily.

It catalyses the reaction orotidine 5'-phosphate + H(+) = UMP + CO2. Its pathway is pyrimidine metabolism; UMP biosynthesis via de novo pathway; UMP from orotate: step 2/2. This chain is Orotidine 5'-phosphate decarboxylase, found in Caldicellulosiruptor saccharolyticus (strain ATCC 43494 / DSM 8903 / Tp8T 6331).